The sequence spans 248 residues: Pyridoxine 5'-phosphate synthase (248 aa).

N12 serves as a coordination point for 3-amino-2-oxopropyl phosphate. 14–15 (DH) is a 1-deoxy-D-xylulose 5-phosphate binding site. A 3-amino-2-oxopropyl phosphate-binding site is contributed by R23. H48 (proton acceptor) is an active-site residue. 2 residues coordinate 1-deoxy-D-xylulose 5-phosphate: R50 and H55. The active-site Proton acceptor is the E75. 1-deoxy-D-xylulose 5-phosphate is bound at residue T105. H196 acts as the Proton donor in catalysis. Residues G197 and 218 to 219 (GH) each bind 3-amino-2-oxopropyl phosphate.

The protein belongs to the PNP synthase family. In terms of assembly, homooctamer; tetramer of dimers.

It is found in the cytoplasm. The enzyme catalyses 3-amino-2-oxopropyl phosphate + 1-deoxy-D-xylulose 5-phosphate = pyridoxine 5'-phosphate + phosphate + 2 H2O + H(+). The protein operates within cofactor biosynthesis; pyridoxine 5'-phosphate biosynthesis; pyridoxine 5'-phosphate from D-erythrose 4-phosphate: step 5/5. In terms of biological role, catalyzes the complicated ring closure reaction between the two acyclic compounds 1-deoxy-D-xylulose-5-phosphate (DXP) and 3-amino-2-oxopropyl phosphate (1-amino-acetone-3-phosphate or AAP) to form pyridoxine 5'-phosphate (PNP) and inorganic phosphate. The sequence is that of Pyridoxine 5'-phosphate synthase from Pseudomonas fluorescens (strain ATCC BAA-477 / NRRL B-23932 / Pf-5).